A 717-amino-acid polypeptide reads, in one-letter code: Fatty acid oxidation complex subunit alpha (717 aa).

The tract at residues 1–189 (MIYQSPTIEV…KVGAIDAVVA (189 aa)) is enoyl-CoA hydratase/isomerase. Asp296 lines the substrate pocket. The interval 311–717 (KKVNSAAVLG…ANNGSYYQQA (407 aa)) is 3-hydroxyacyl-CoA dehydrogenase. Residues Met324, Asp343, 400–402 (VVE), Lys407, and Ser429 contribute to the NAD(+) site. Residue His450 is the For 3-hydroxyacyl-CoA dehydrogenase activity of the active site. Asn453 contributes to the NAD(+) binding site. Substrate-binding residues include Asn500 and Tyr660.

In the N-terminal section; belongs to the enoyl-CoA hydratase/isomerase family. The protein in the C-terminal section; belongs to the 3-hydroxyacyl-CoA dehydrogenase family. Heterotetramer of two alpha chains (FadB) and two beta chains (FadA).

It catalyses the reaction a (3S)-3-hydroxyacyl-CoA + NAD(+) = a 3-oxoacyl-CoA + NADH + H(+). The enzyme catalyses a (3S)-3-hydroxyacyl-CoA = a (2E)-enoyl-CoA + H2O. The catalysed reaction is a 4-saturated-(3S)-3-hydroxyacyl-CoA = a (3E)-enoyl-CoA + H2O. It carries out the reaction (3S)-3-hydroxybutanoyl-CoA = (3R)-3-hydroxybutanoyl-CoA. It catalyses the reaction a (3Z)-enoyl-CoA = a 4-saturated (2E)-enoyl-CoA. The enzyme catalyses a (3E)-enoyl-CoA = a 4-saturated (2E)-enoyl-CoA. It functions in the pathway lipid metabolism; fatty acid beta-oxidation. Functionally, involved in the aerobic and anaerobic degradation of long-chain fatty acids via beta-oxidation cycle. Catalyzes the formation of 3-oxoacyl-CoA from enoyl-CoA via L-3-hydroxyacyl-CoA. It can also use D-3-hydroxyacyl-CoA and cis-3-enoyl-CoA as substrate. This chain is Fatty acid oxidation complex subunit alpha, found in Shewanella halifaxensis (strain HAW-EB4).